The primary structure comprises 201 residues: Urease accessory protein UreG (201 aa).

Residue 12–19 participates in GTP binding; it reads GPVGSGKT.

This sequence belongs to the SIMIBI class G3E GTPase family. UreG subfamily. As to quaternary structure, homodimer. UreD, UreF and UreG form a complex that acts as a GTP-hydrolysis-dependent molecular chaperone, activating the urease apoprotein by helping to assemble the nickel containing metallocenter of UreC. The UreE protein probably delivers the nickel.

The protein localises to the cytoplasm. Its function is as follows. Facilitates the functional incorporation of the urease nickel metallocenter. This process requires GTP hydrolysis, probably effectuated by UreG. This chain is Urease accessory protein UreG, found in Dechloromonas aromatica (strain RCB).